We begin with the raw amino-acid sequence, 501 residues long: Probable cytosol aminopeptidase (501 aa).

2 residues coordinate Mn(2+): Lys267 and Asp272. Residue Lys279 is part of the active site. Residues Asp290, Asp349, and Glu351 each contribute to the Mn(2+) site. Arg353 is a catalytic residue.

Belongs to the peptidase M17 family. Mn(2+) is required as a cofactor.

Its subcellular location is the cytoplasm. It catalyses the reaction Release of an N-terminal amino acid, Xaa-|-Yaa-, in which Xaa is preferably Leu, but may be other amino acids including Pro although not Arg or Lys, and Yaa may be Pro. Amino acid amides and methyl esters are also readily hydrolyzed, but rates on arylamides are exceedingly low.. It carries out the reaction Release of an N-terminal amino acid, preferentially leucine, but not glutamic or aspartic acids.. Its function is as follows. Presumably involved in the processing and regular turnover of intracellular proteins. Catalyzes the removal of unsubstituted N-terminal amino acids from various peptides. The polypeptide is Probable cytosol aminopeptidase (Hamiltonella defensa subsp. Acyrthosiphon pisum (strain 5AT)).